Reading from the N-terminus, the 206-residue chain is Small ribosomal subunit protein uS4B (206 aa).

The region spanning 96–156 is the S4 RNA-binding domain; it reads GRLDNVVYRM…EKAKKQSRIG (61 aa).

It belongs to the universal ribosomal protein uS4 family. In terms of assembly, part of the 30S ribosomal subunit. Contacts protein S5. The interaction surface between S4 and S5 is involved in control of translational fidelity.

One of the primary rRNA binding proteins, it binds directly to 16S rRNA where it nucleates assembly of the body of the 30S subunit. Its function is as follows. With S5 and S12 plays an important role in translational accuracy. The protein is Small ribosomal subunit protein uS4B of Psychromonas ingrahamii (strain DSM 17664 / CCUG 51855 / 37).